Reading from the N-terminus, the 330-residue chain is Phosphate acyltransferase (330 aa).

Belongs to the PlsX family. As to quaternary structure, homodimer. Probably interacts with PlsY.

It is found in the cytoplasm. It carries out the reaction a fatty acyl-[ACP] + phosphate = an acyl phosphate + holo-[ACP]. The protein operates within lipid metabolism; phospholipid metabolism. Functionally, catalyzes the reversible formation of acyl-phosphate (acyl-PO(4)) from acyl-[acyl-carrier-protein] (acyl-ACP). This enzyme utilizes acyl-ACP as fatty acyl donor, but not acyl-CoA. The protein is Phosphate acyltransferase of Bacillus cereus (strain AH820).